The sequence spans 366 residues: MWPLSHRHLCLAFLLVCVLSAISFFLHIHQDSIRHGLGLSVLCPDRRLVTPPVAIFCLPGTPMSPNTSSPCPQNSASLSGTWTIYPDGRFGNQMGQYATLLALAQLNGRRAFILPAMHAALAPVFRITLPVLAPEVDSRTPWRELRLHDWMSEEYADLGDPFLKLSGFPCSWTFFHHLREQIRSEFTLHDHLREEAQSVLRRLRLGRSGDQPRTFVGVHVRRGDYLQVMPQRWKGVVGNGAYLREAMDWFRARHEAPVFVVTSNGMDWCRENIDASKGDVMFAGDGQEASPWKDFALLTQCNHTIMTIGTFGFWAAYLAGGDTVYLANFTLPDSEFLKIFKPEAAFLPEWVGINADLSPLWTLAEP.

Residues 1–8 (MWPLSHRH) are Cytoplasmic-facing. The chain crosses the membrane as a helical; Signal-anchor for type II membrane protein span at residues 9-25 (LCLAFLLVCVLSAISFF). Topologically, residues 26–366 (LHIHQDSIRH…LSPLWTLAEP (341 aa)) are lumenal. Residues asparagine 66, asparagine 302, and asparagine 328 are each glycosylated (N-linked (GlcNAc...) asparagine).

Belongs to the glycosyltransferase 11 family.

The protein resides in the golgi apparatus. It is found in the golgi stack membrane. It catalyses the reaction a beta-D-galactosyl-(1-&gt;4)-N-acetyl-beta-D-glucosaminyl derivative + GDP-beta-L-fucose = an alpha-L-Fuc-(1-&gt;2)-beta-D-Gal-(1-&gt;4)-beta-D-GlcNAc derivative + GDP + H(+). It carries out the reaction a ganglioside GA1 + GDP-beta-L-fucose = a ganglioside Fuc-GA1 + GDP + H(+). The catalysed reaction is a beta-D-Gal-(1-&gt;3)-beta-D-GlcNAc-(1-&gt;3)-beta-D-Gal-(1-&gt;4)-beta-D-Glc-(1&lt;-&gt;1')-Cer(d18:1(4E)) + GDP-beta-L-fucose = alpha-L-fucosyl-(1-&gt;2)- beta-D-galactosyl-(1-&gt;3)-N-acetyl-beta-D-glucosaminyl-(1-&gt;3)-beta-D-galactosyl-(1-&gt;4)-beta-D-glucosyl-(1&lt;-&gt;1')-N-acylsphing-4-enine + GDP + H(+). The enzyme catalyses a neolactoside nLc4Cer(d18:1(4E)) + GDP-beta-L-fucose = a neolactoside IV(2)-alpha-Fuc-nLc4Cer(d18:1(4E)) + GDP + H(+). It catalyses the reaction a ganglioside GM1 + GDP-beta-L-fucose = a ganglioside Fuc-GM1 + GDP + H(+). It carries out the reaction beta-D-galactosyl-(1-&gt;3)-N-acetyl-D-galactosamine + GDP-beta-L-fucose = alpha-L-fucosyl-(1-&gt;2)-beta-D-galactosyl-(1-&gt;3)-N-acetyl-D-galactosamine + GDP + H(+). It participates in protein modification; protein glycosylation. Catalyzes the transfer of L-fucose, from a guanosine diphosphate-beta-L-fucose, to the terminal galactose residue of glycoconjugates through an alpha(1,2) linkage leading to H antigen synthesis that is an intermediate substrate in the synthesis of ABO blood group antigens. H antigen is essential for maturation of the glomerular layer of the main olfactory bulb, in cell migration and early cell-cell contacts during tumor associated angiogenesis. Preferentially fucosylates soluble lactose and to a lesser extent fucosylates glycolipids gangliosides GA1 and GM1a. The chain is Galactoside alpha-(1,2)-fucosyltransferase 1 from Aotus azarae (Azara's night monkey).